The following is a 353-amino-acid chain: GTPase Obg (353 aa).

Positions 1 to 159 constitute an Obg domain; it reads MKFVDEVRIH…RDLVLELKLL (159 aa). The OBG-type G domain maps to 160–333; it reads ADVGIVGYPN…LMDAVGRALY (174 aa). GTP is bound by residues 166 to 173, 191 to 195, 212 to 215, 283 to 286, and 314 to 316; these read GYPNAGKS, FTTLV, DIPG, TKID, and SAV. 2 residues coordinate Mg(2+): Ser173 and Thr193.

Belongs to the TRAFAC class OBG-HflX-like GTPase superfamily. OBG GTPase family. In terms of assembly, monomer. Mg(2+) serves as cofactor.

The protein resides in the cytoplasm. Functionally, an essential GTPase which binds GTP, GDP and possibly (p)ppGpp with moderate affinity, with high nucleotide exchange rates and a fairly low GTP hydrolysis rate. Plays a role in control of the cell cycle, stress response, ribosome biogenesis and in those bacteria that undergo differentiation, in morphogenesis control. In Anaeromyxobacter sp. (strain Fw109-5), this protein is GTPase Obg.